Reading from the N-terminus, the 120-residue chain is Peptidyl-tRNA hydrolase (120 aa).

Belongs to the PTH2 family. As to quaternary structure, homodimer.

The protein resides in the cytoplasm. The catalysed reaction is an N-acyl-L-alpha-aminoacyl-tRNA + H2O = an N-acyl-L-amino acid + a tRNA + H(+). In terms of biological role, the natural substrate for this enzyme may be peptidyl-tRNAs which drop off the ribosome during protein synthesis. In Saccharolobus solfataricus (strain ATCC 35092 / DSM 1617 / JCM 11322 / P2) (Sulfolobus solfataricus), this protein is Peptidyl-tRNA hydrolase.